We begin with the raw amino-acid sequence, 428 residues long: Elongation factor 1-alpha (428 aa).

Residues 5–225 (KPILNVAFIG…DAFQPPEKPT (221 aa)) form the tr-type G domain. Positions 14–21 (GHVDAGKS) are G1. Residue 14 to 21 (GHVDAGKS) participates in GTP binding. Serine 21 is a Mg(2+) binding site. A G2 region spans residues 70 to 74 (GVTID). The G3 stretch occupies residues 91-94 (DCPG). GTP contacts are provided by residues 91–95 (DCPGH) and 149–152 (NKMD). Residues 149–152 (NKMD) form a G4 region. Residues 189 to 191 (ASL) are G5.

It belongs to the TRAFAC class translation factor GTPase superfamily. Classic translation factor GTPase family. EF-Tu/EF-1A subfamily.

Its subcellular location is the cytoplasm. The enzyme catalyses GTP + H2O = GDP + phosphate + H(+). GTP hydrolase that promotes the GTP-dependent binding of aminoacyl-tRNA to the A-site of ribosomes during protein biosynthesis. In Methanococcus maripaludis (strain C5 / ATCC BAA-1333), this protein is Elongation factor 1-alpha.